We begin with the raw amino-acid sequence, 101 residues long: Aspartyl/glutamyl-tRNA(Asn/Gln) amidotransferase subunit C (101 aa).

It belongs to the GatC family. As to quaternary structure, heterotrimer of A, B and C subunits.

It catalyses the reaction L-glutamyl-tRNA(Gln) + L-glutamine + ATP + H2O = L-glutaminyl-tRNA(Gln) + L-glutamate + ADP + phosphate + H(+). It carries out the reaction L-aspartyl-tRNA(Asn) + L-glutamine + ATP + H2O = L-asparaginyl-tRNA(Asn) + L-glutamate + ADP + phosphate + 2 H(+). Functionally, allows the formation of correctly charged Asn-tRNA(Asn) or Gln-tRNA(Gln) through the transamidation of misacylated Asp-tRNA(Asn) or Glu-tRNA(Gln) in organisms which lack either or both of asparaginyl-tRNA or glutaminyl-tRNA synthetases. The reaction takes place in the presence of glutamine and ATP through an activated phospho-Asp-tRNA(Asn) or phospho-Glu-tRNA(Gln). The chain is Aspartyl/glutamyl-tRNA(Asn/Gln) amidotransferase subunit C from Lactococcus lactis subsp. cremoris (strain SK11).